The following is a 288-amino-acid chain: Acetyl-coenzyme A carboxylase carboxyl transferase subunit beta (288 aa).

The CoA carboxyltransferase N-terminal domain occupies 30 to 288; it reads IMTKCPKCKK…KLHQEVKKDA (259 aa). Zn(2+) contacts are provided by Cys-34, Cys-37, Cys-53, and Cys-56. A C4-type zinc finger spans residues 34 to 56; the sequence is CPKCKKIMYTKELNENLNVCFNC.

It belongs to the AccD/PCCB family. As to quaternary structure, acetyl-CoA carboxylase is a heterohexamer composed of biotin carboxyl carrier protein (AccB), biotin carboxylase (AccC) and two subunits each of ACCase subunit alpha (AccA) and ACCase subunit beta (AccD). It depends on Zn(2+) as a cofactor.

It localises to the cytoplasm. It catalyses the reaction N(6)-carboxybiotinyl-L-lysyl-[protein] + acetyl-CoA = N(6)-biotinyl-L-lysyl-[protein] + malonyl-CoA. Its pathway is lipid metabolism; malonyl-CoA biosynthesis; malonyl-CoA from acetyl-CoA: step 1/1. Functionally, component of the acetyl coenzyme A carboxylase (ACC) complex. Biotin carboxylase (BC) catalyzes the carboxylation of biotin on its carrier protein (BCCP) and then the CO(2) group is transferred by the transcarboxylase to acetyl-CoA to form malonyl-CoA. The polypeptide is Acetyl-coenzyme A carboxylase carboxyl transferase subunit beta (Staphylococcus haemolyticus (strain JCSC1435)).